The following is a 167-amino-acid chain: Ribosome maturation factor RimM (167 aa).

Residues Glu94–Leu165 enclose the PRC barrel domain.

Belongs to the RimM family. As to quaternary structure, binds ribosomal protein uS19.

The protein localises to the cytoplasm. Functionally, an accessory protein needed during the final step in the assembly of 30S ribosomal subunit, possibly for assembly of the head region. Essential for efficient processing of 16S rRNA. May be needed both before and after RbfA during the maturation of 16S rRNA. It has affinity for free ribosomal 30S subunits but not for 70S ribosomes. This is Ribosome maturation factor RimM from Staphylococcus aureus (strain bovine RF122 / ET3-1).